The primary structure comprises 161 residues: uncharacterized protein (161 aa).

In terms of assembly, interacts with ribosomes.

This is an uncharacterized protein from Saccharomyces cerevisiae (strain ATCC 204508 / S288c) (Baker's yeast).